Consider the following 932-residue polypeptide: Lon protease homolog 2, peroxisomal (932 aa).

In terms of domain architecture, Lon N-terminal spans 11 to 259; the sequence is LALVPLPKGS…RVVELLARQV (249 aa). The tract at residues 304–340 is disordered; that stretch reads TGLTPPGAAGGRNNEDEKETNEVDELQKRLQEAELSP. Residues 328 to 340 show a composition bias toward basic and acidic residues; that stretch reads ELQKRLQEAELSP. 486–493 is an ATP binding site; it reads GPPGTGKT. The region spanning 729 to 916 is the Lon proteolytic domain; the sequence is HGRPGVVTGL…WEAIRQVWPG (188 aa). Active-site residues include Ser822 and Lys865. Positions 930 to 932 match the Microbody targeting signal motif; that stretch reads SRL.

Belongs to the peptidase S16 family.

The protein resides in the peroxisome matrix. It carries out the reaction Hydrolysis of proteins in presence of ATP.. In terms of biological role, ATP-dependent serine protease that mediates the selective degradation of misfolded and unassembled polypeptides in the peroxisomal matrix. Necessary for type 2 peroxisome targeting signal (PTS2)-containing protein processing and facilitates peroxisome matrix protein import. The polypeptide is Lon protease homolog 2, peroxisomal (Aspergillus fumigatus (strain ATCC MYA-4609 / CBS 101355 / FGSC A1100 / Af293) (Neosartorya fumigata)).